The following is a 147-amino-acid chain: MEIKTKAMGLVEIQDEQIIELVDGFYGFEEFHKYALLDSGKEPFFWVQSLDDQNLAFIVIDPFLFRPDYELDIDDELLKPIEAESPKDLLVFALVTIPPAGSPITANLQGPLIINKKNKKAFQAVLNDGKWNTKHDILAELNAAGRN.

Belongs to the FliW family. As to quaternary structure, interacts with translational regulator CsrA and flagellin(s).

It is found in the cytoplasm. In terms of biological role, acts as an anti-CsrA protein, binds CsrA and prevents it from repressing translation of its target genes, one of which is flagellin. Binds to flagellin and participates in the assembly of the flagellum. The chain is Flagellar assembly factor FliW from Treponema denticola (strain ATCC 35405 / DSM 14222 / CIP 103919 / JCM 8153 / KCTC 15104).